Reading from the N-terminus, the 453-residue chain is tRNA modification GTPase MnmE (453 aa).

(6S)-5-formyl-5,6,7,8-tetrahydrofolate contacts are provided by Arg22, Glu79, and Lys119. The 162-residue stretch at 215–376 (GMKVVIAGRP…LREHLKACMG (162 aa)) folds into the TrmE-type G domain. Asn225 is a K(+) binding site. GTP-binding positions include 225 to 230 (NAGKSS), 244 to 250 (TEIAGTT), 269 to 272 (DTAG), and 334 to 337 (NKAD). Ser229 is a Mg(2+) binding site. Residues Thr244, Ile246, and Thr249 each coordinate K(+). Position 250 (Thr250) interacts with Mg(2+). Lys453 serves as a coordination point for (6S)-5-formyl-5,6,7,8-tetrahydrofolate.

This sequence belongs to the TRAFAC class TrmE-Era-EngA-EngB-Septin-like GTPase superfamily. TrmE GTPase family. In terms of assembly, homodimer. Heterotetramer of two MnmE and two MnmG subunits. Requires K(+) as cofactor.

It localises to the cytoplasm. Exhibits a very high intrinsic GTPase hydrolysis rate. Involved in the addition of a carboxymethylaminomethyl (cmnm) group at the wobble position (U34) of certain tRNAs, forming tRNA-cmnm(5)s(2)U34. The polypeptide is tRNA modification GTPase MnmE (Aeromonas hydrophila subsp. hydrophila (strain ATCC 7966 / DSM 30187 / BCRC 13018 / CCUG 14551 / JCM 1027 / KCTC 2358 / NCIMB 9240 / NCTC 8049)).